We begin with the raw amino-acid sequence, 357 residues long: MWYNNQLTQSLNIQYPIIQAGMAGSTTAELVATVSNKGGLGCIGAGYFTTKKLEQEIQKVQGLTSQPFGVNLFVPSHQSYTNEQVEHMNAWLKPYRKALNLEEPVVNISEEQQFKSAIQTVIKYRVPVCCFTFGIPSKEIIEQLKGAKITLIGTATTVDEAIANEHAGMDIVVAQGSEAGGHRGSFLTTNNQREPLIGTMSLIPQIVDHVSIPVVAAGGVMDGRGILASQILGAQGVQMGTAFLTTEESGANQLVKQAVLHSKETDTIVTDVFSGKSARGINNEFVETMKQYEGNIPPYPVQNQLTNSIRKTAASTGHREWTHMWSGQSPRLATSQHVNQLMDRLVEQVKTLLTVVR.

FMN is bound by residues Asn71, Gln175, Gly180, Gly219, and 238–241; that span reads QMGT.

It belongs to the nitronate monooxygenase family. NMO class I subfamily. FMN is required as a cofactor.

It catalyses the reaction 3 propionate 3-nitronate + 3 O2 + H2O = 3 3-oxopropanoate + 2 nitrate + nitrite + H2O2 + 3 H(+). Nitronate monooxygenase that uses molecular oxygen to catalyze the oxidative denitrification of alkyl nitronates. Acts on propionate 3-nitronate (P3N), the presumed physiological substrate. Probably functions in the detoxification of P3N, a metabolic poison produced by plants and fungi as a defense mechanism. The sequence is that of Probable nitronate monooxygenase from Staphylococcus haemolyticus (strain JCSC1435).